A 247-amino-acid polypeptide reads, in one-letter code: MELFSEKISIKETNVLLKVDNPKLFKIAKKKIIDERLNLEKYISKNPVFLTTYSPFKISNDAPEIVKLMANSSENANVGPMAAVAGTFSELVIHSLLENNSKSAICENGGDIALSSDFDIIVGLYAGNSPISGNLGFKLKKEKIKNGYGVCTSSGTVGHSVSFGNADSVTVFAKSASIADAAATSIGNFAVGSPDEAINKCLEQAENILKIDGVFVTFQEYAGKVGKIPTLIRTEKKEAFGNVFEMV.

It belongs to the UPF0280 family.

This Methanococcus vannielii (strain ATCC 35089 / DSM 1224 / JCM 13029 / OCM 148 / SB) protein is UPF0280 protein Mevan_0550.